The chain runs to 2656 residues: 1-phosphatidylinositol 3-phosphate 5-kinase (2656 aa).

The interval 24–159 is disordered; it reads FGTDDSQKDF…NSTNNDTSSN (136 aa). Composition is skewed to low complexity over residues 59 to 107 and 124 to 159; these read NNNN…NNNN and SNTT…TSSN. The segment at 198 to 255 adopts an FYVE-type zinc-finger fold; it reads DHSSAVCYECSEEFTTFKRRHHCRLCGQIFCWKCSQKTLTDGKGERVRVCNFCYRRYM. The Zn(2+) site is built by cysteine 204, cysteine 207, cysteine 220, cysteine 223, cysteine 228, cysteine 231, cysteine 247, and cysteine 250. Polar residues predominate over residues 304-331; sequence NVSLGNSGDNSSFVQSPNNNFSQSPTFS. Disordered stretches follow at residues 304–383, 465–495, 517–570, 618–657, 670–823, 1115–1150, 1633–1659, 1710–1844, 2031–2127, 2179–2208, 2246–2304, and 2617–2656; these read NVSL…NNQQ, DHHQ…SPIV, DNLD…SSSS, NNND…NTSF, TIGR…QQQP, SNSI…NNST, RSKR…QILI, VNNN…SSTP, QQQQ…SISP, NQQQ…SIIE, QQGD…SSNS, and NNNN…QINK. The span at 332–355 shows a compositional bias: low complexity; the sequence is QQQQQQQQQQQQQQQQQQQQQQQQ. Composition is skewed to polar residues over residues 356-371, 473-489, and 542-557; these read TTGV…NSTL, SNSH…TPSG, and SHSS…TVST. Composition is skewed to low complexity over residues 558 to 570, 618 to 637, 674 to 730, 743 to 757, and 811 to 823; these read GESN…SSSS, NNND…NNNN, NNNN…NLPN, QQQQ…QPQP, and PSSS…QQQP. 2 stretches are compositionally biased toward low complexity: residues 1639–1656 and 1710–1746; these read QQQQ…PQPQ and VNNN…NNNN. Coiled coils occupy residues 1741–1823 and 2019–2061; these read NNNN…NNNN and KRIS…QQEQ. Residues 1750 to 1798 are compositionally biased toward basic and acidic residues; the sequence is NKSENENENKNENKNENENENENKNENKNENENENKKENENQLEIKNEN. Composition is skewed to low complexity over residues 1807-1833, 2031-2061, 2078-2107, and 2118-2127; these read NNNN…IDNN, QQQQ…QQEQ, SPSS…SETN, and LSGSPISISP. Positions 2193–2202 are enriched in basic and acidic residues; that stretch reads IDEKDDRNTE. Composition is skewed to low complexity over residues 2252 to 2283 and 2618 to 2647; these read NNNN…NNNN and NNNN…GNIN. Positions 2275–2596 constitute a PIPK domain; sequence NNNNTNNNNE…RFRDAMWLYF (322 aa).

The protein resides in the endosome membrane. It localises to the early endosome membrane. The protein localises to the cytoplasmic vesicle. Its subcellular location is the phagosome membrane. It is found in the late endosome membrane. The catalysed reaction is a 1,2-diacyl-sn-glycero-3-phospho-(1D-myo-inositol-3-phosphate) + ATP = a 1,2-diacyl-sn-glycero-3-phospho-(1D-myo-inositol-3,5-bisphosphate) + ADP + H(+). The enzyme catalyses a 1,2-diacyl-sn-glycero-3-phospho-(1D-myo-inositol) + ATP = a 1,2-diacyl-sn-glycero-3-phospho-(1D-myo-inositol-5-phosphate) + ADP + H(+). It catalyses the reaction L-seryl-[protein] + ATP = O-phospho-L-seryl-[protein] + ADP + H(+). In terms of biological role, dual specificity kinase part of the PI(3,5)P2 regulatory complex which regulates both the synthesis and turnover of phosphatidylinositol 3,5-bisphosphate (PtdIns(3,5)P2). Catalyzes the phosphorylation of phosphatidylinositol 3-phosphate on the fifth hydroxyl of the myo-inositol ring, to form phosphatidylinositol 3,5-bisphosphate. This chain is 1-phosphatidylinositol 3-phosphate 5-kinase (pip5k3), found in Dictyostelium discoideum (Social amoeba).